Consider the following 182-residue polypeptide: ATP-dependent protease subunit HslV (182 aa).

Residue Thr-10 is part of the active site. Na(+)-binding residues include Ala-166, Cys-169, and Ser-172.

This sequence belongs to the peptidase T1B family. HslV subfamily. In terms of assembly, a double ring-shaped homohexamer of HslV is capped on each side by a ring-shaped HslU homohexamer. The assembly of the HslU/HslV complex is dependent on binding of ATP.

It localises to the cytoplasm. It catalyses the reaction ATP-dependent cleavage of peptide bonds with broad specificity.. With respect to regulation, allosterically activated by HslU binding. Its function is as follows. Protease subunit of a proteasome-like degradation complex believed to be a general protein degrading machinery. The sequence is that of ATP-dependent protease subunit HslV from Rickettsia prowazekii (strain Madrid E).